The following is a 358-amino-acid chain: Probable tartrate dehydrogenase/decarboxylase TtuC' (358 aa).

Mn(2+)-binding residues include Asp-222, Asp-246, and Asp-250.

The protein belongs to the isocitrate and isopropylmalate dehydrogenases family. It depends on Mg(2+) as a cofactor. Mn(2+) serves as cofactor. Requires K(+) as cofactor.

The protein localises to the cytoplasm. It catalyses the reaction tartrate + NAD(+) = 2-hydroxy-3-oxosuccinate + NADH + H(+). The catalysed reaction is (2R,3S)-tartrate + NAD(+) = 2-hydroxy-3-oxosuccinate + NADH + H(+). It carries out the reaction (2R,3R)-tartrate + NAD(+) = 2-hydroxy-3-oxosuccinate + NADH + H(+). The enzyme catalyses (2R,3R)-tartrate + H(+) = (R)-glycerate + CO2. It catalyses the reaction (R)-malate + NAD(+) = pyruvate + CO2 + NADH. The protein operates within carbohydrate acid metabolism; tartrate degradation; 2-hydroxy-3-oxosuccinate from L-tartrate: step 1/1. It functions in the pathway carbohydrate acid metabolism; tartrate degradation; 2-hydroxy-3-oxosuccinate from meso-tartrate: step 1/1. It participates in carbohydrate acid metabolism; tartrate degradation; D-glycerate from L-tartrate: step 1/1. In terms of biological role, has multiple catalytic activities. Apart from catalyzing the oxidation of (+)-tartrate to oxaloglycolate, also converts meso-tartrate to D-glycerate and catalyzes the oxidative decarboxylation of D-malate to pyruvate. In Agrobacterium vitis (Rhizobium vitis), this protein is Probable tartrate dehydrogenase/decarboxylase TtuC' (ttuC').